A 1676-amino-acid chain; its full sequence is MITIAPMLFSVLRAYDLACINTAGPLIILGIYYGFLITLPIAPSQLVCIRAFLLEGEGKESESPGTVAKSGILIAAISGLTVSQLAFFLSIYWPPLYMIWLKPHLLTLLVLPYMFFYWSRIQEFESSGWLKTEQSKIYDPRVRAAFLDSFLFQALNPVLLPSPVMTRLMSVFLFRYSQVSLFILGTAIGWLGGQIMFVLLSWCLLLRLERDLPTIYVIVRRLVHNIFPPIVFGLCLAYMGRAPVSFFRKQTDIQQMPEIRPTELWPSVAFDTTLWKRPFRLPKKDMLDNFPPLYNNKKRFSQYLFEVCVSEGKRRLSYTYPQSLLAFQSHLEDCLDVTYVSQQTDNDIYHEWATSKQNRKDQISNILLKQMEALDNGAPIETVIENKIASLTTIEQPVRKRLDPRLAKYMRYNTLSNKTESPWIQGESSVLEDTSLELQSKPNLFHLTENNYLREWISIKSEQMINTLILPWQSLEHDSDAALLTLLNNSPETNINKEQLYTWESLLHAYKLNPKVDIYKTMPGHKKLLYYLTKQPVTKLLTQIFHMDQRVDSSDIKTLLDYYKPLPVWYAQRHFTTTDIRQPRISKRLKSFDFVRRLITGSLRARRRNTLIWNALQIKPETPFLLRVHNVSKQEDMSIKQAISVTTQQTNLYASETAKRFNFRLAHMVRSPALVIQSWFRKYVKQPILILFKNVGRLLLLQKTEWSEDIGDWAREVYIYYSYDGKQYSITERPKKWYYTGLQIRILFPFHLRPWHPSNATADGKDKINLQLQSDFDLVNNNNSILEHSSYLTVWGSETEVAFGNVKKKPSFWKPTFKAIRLVLSRKLNKQFVKIGNMFQPVYKLVQTPLSSKFVNQTMFAQEEPSVSDNMKHNTIEQPINSIDNKNLFFLNHNKDNKATKNVLSIEKSSLILSDNRASQDSLVLSSDSNKLYTNEHKLENTSKQLLVIKSEHTKPLQQPIMLFRIKPILEANTIIKHSLIGRPPMQTNQKSVDNFQVQLLSKESSISIRYKLTQFNSLLVQFQRTWIYIKQNIQNIIVELFKFIQLQFTETRMTILHLIQQLMQLVSSQVITGFRTISSGIDHLFDSYYIWRMKHFTAKHLQNVYETTPIDSSSITQAYILNKIWQSIIESTPNLSWVTQQWTSENRLQDYLQTQLVDQGILNCQEPNKLTQANWNKWLEFFPQYIPSSNIWLNVIPNRYRSEVNLYWKYCDNIDYKNKHPIVSINAHNKIQQSNGLRYHTPLLQKLEKLSKRWKMYNLYRRYTSFVNNINTNRFPTEPILSNELNQLNYVNENIVHNSVNKTEETISYREPIEWGFTRTRLGRFSPYLTLSQSHSNNSIDDIDTEDIETLGLFAILQTYKEFNKKTNFTSSSVDHKLHKQESSAAPKIDHKLDSQLVSTNLIQRTCFEPMYASKLKSKLLKERFKNLLNAARLSILATKSGVTTDTTTFLSSNMQRDLSILTEDLNTHKDINEGIEISEETKQDAYSKAMRNSVLFKQNLQNWRLKIMDDQIFMYNMVSPILRLSNREHNDYILNLCNCLLGELSSNLVESIVALTPEDILLPTSSRELRVLDCLDLTAGPNDYQSVSNNTLIQNKTNSIAVTDQILQNKSKLSYSNFVSNIQQKSKPSYIIKRFLWPTYRLEDLACMNRFWLSSGNQSRFSALRISMYPSMLE.

6 helical membrane-spanning segments follow: residues 23 to 43 (AGPL…PIAP), 71 to 91 (GILI…FLSI), 96 to 116 (LYMI…YMFF), 145 to 165 (AFLD…SPVM), 179 to 199 (VSLF…MFVL), and 226 to 246 (IFPP…PVSF).

The protein belongs to the TIC214 family. As to quaternary structure, part of the Tic complex.

The protein resides in the plastid. The protein localises to the chloroplast inner membrane. Involved in protein precursor import into chloroplasts. May be part of an intermediate translocation complex acting as a protein-conducting channel at the inner envelope. This is Protein TIC 214 from Zygnema circumcarinatum (Green alga).